The chain runs to 186 residues: Inosine/xanthosine triphosphatase (186 aa).

Gln75 is a binding site for Mg(2+).

The protein belongs to the YjjX NTPase family. In terms of assembly, homodimer. Mg(2+) is required as a cofactor. The cofactor is Mn(2+).

It catalyses the reaction XTP + H2O = XDP + phosphate + H(+). The enzyme catalyses ITP + H2O = IDP + phosphate + H(+). In terms of biological role, phosphatase that hydrolyzes non-canonical purine nucleotides such as XTP and ITP to their respective diphosphate derivatives. Probably excludes non-canonical purines from DNA/RNA precursor pool, thus preventing their incorporation into DNA/RNA and avoiding chromosomal lesions. The polypeptide is Inosine/xanthosine triphosphatase (Shewanella baltica (strain OS185)).